The sequence spans 131 residues: Class I hydrophobin 9 (131 aa).

The first 23 residues, 1–23, serve as a signal peptide directing secretion; it reads MFARRAISIFAFMLVALSIFAAA. Intrachain disulfides connect C52-C112, C59-C106, C60-C93, and C113-C126. The N-linked (GlcNAc...) asparagine glycan is linked to N53. A glycan (N-linked (GlcNAc...) asparagine) is linked at N115.

The protein belongs to the fungal hydrophobin family. Self-assembles to form functional amyloid fibrils called rodlets. Self-assembly into fibrillar rodlets occurs spontaneously at hydrophobic:hydrophilic interfaces and the rodlets further associate laterally to form amphipathic monolayers.

It is found in the secreted. Its subcellular location is the cell wall. Aerial growth, conidiation, and dispersal of filamentous fungi in the environment rely upon a capability of their secreting small amphipathic proteins called hydrophobins (HPBs) with low sequence identity. Class I can self-assemble into an outermost layer of rodlet bundles on aerial cell surfaces, conferring cellular hydrophobicity that supports fungal growth, development and dispersal; whereas Class II form highly ordered films at water-air interfaces through intermolecular interactions but contribute nothing to the rodlet structure. This Flammulina velutipes (Agaricus velutipes) protein is Class I hydrophobin 9.